We begin with the raw amino-acid sequence, 323 residues long: Arginase, hepatic (323 aa).

Residues His-102, Asp-125, His-127, and Asp-129 each contribute to the Mn(2+) site. Residues 127-131, 138-140, and Asp-184 each bind substrate; these read HADIN and SGN. The Mn(2+) site is built by Asp-233 and Asp-235. Residues Thr-247 and Glu-278 each coordinate substrate.

It belongs to the arginase family. In terms of assembly, homotrimer. The cofactor is Mn(2+).

It catalyses the reaction L-arginine + H2O = urea + L-ornithine. It functions in the pathway nitrogen metabolism; urea cycle; L-ornithine and urea from L-arginine: step 1/1. In Aquarana catesbeiana (American bullfrog), this protein is Arginase, hepatic.